A 260-amino-acid chain; its full sequence is Indole-3-glycerol phosphate synthase (260 aa).

It belongs to the TrpC family.

It catalyses the reaction 1-(2-carboxyphenylamino)-1-deoxy-D-ribulose 5-phosphate + H(+) = (1S,2R)-1-C-(indol-3-yl)glycerol 3-phosphate + CO2 + H2O. It functions in the pathway amino-acid biosynthesis; L-tryptophan biosynthesis; L-tryptophan from chorismate: step 4/5. The chain is Indole-3-glycerol phosphate synthase from Ruminiclostridium cellulolyticum (strain ATCC 35319 / DSM 5812 / JCM 6584 / H10) (Clostridium cellulolyticum).